Here is a 167-residue protein sequence, read N- to C-terminus: Novel acetylcholine receptor chaperone (167 aa).

The Cytoplasmic segment spans residues 1-5 (MASPR). The helical transmembrane segment at 6-26 (TITIMALSVALGLFFVFMGTI) threads the bilayer. Residues 27–61 (KLTPRLSKDAYSEMKRAYKSYVRALPLLKKMGINS) lie on the Lumenal side of the membrane. The interval 43–54 (AYKSYVRALPLL) is interaction with NGFR. The helical transmembrane segment at 62–82 (ILLRKSIGALEVACGIVMTLV) threads the bilayer. Residues 83 to 88 (PGRPKD) are Cytoplasmic-facing. A helical membrane pass occupies residues 89 to 109 (VANFFLLLLVLAVLFFHQLVG). Topologically, residues 110–114 (DPLKR) are lumenal. A helical transmembrane segment spans residues 115–132 (YAHALVFGILLTCRLLIA). At 133-167 (RKPEDRSSEKKALPESAEEQPSLYEKAPQGKVKVS) the chain is on the cytoplasmic side. A compositionally biased stretch (basic and acidic residues) spans 135-145 (PEDRSSEKKAL). The disordered stretch occupies residues 135 to 167 (PEDRSSEKKALPESAEEQPSLYEKAPQGKVKVS).

It belongs to the DoxX family. May interact with NGFR. Interacts with RPN1, RPN2 and CANX. In terms of tissue distribution, brain (at protein level). Expressed in the spinal cord dorsal horn (at protein level).

It localises to the peroxisome membrane. It is found in the cytoplasmic vesicle. Its subcellular location is the endoplasmic reticulum membrane. In terms of biological role, molecular chaperone which mediates the proper assembly and functional expression of the nicotinic acetylcholine receptors (nAChRs) throughout the brain. Essential for the proper folding, assembly, function and surface trafficking of alpha-7 (CHRNA7), alpha-4-beta-2, alpha-3-beta-2 and alpha-3-beta-4 receptors. Stably associates with ribophorin-1 (RPN1) and ribophorin-2 (RPN2) (components of the oligosaccharyl transferase (OST) complex) and with calnexin (CANX), both of which are critical for NACHO-mediated effects on CHRNA7 assembly and function. Facilitates the proper folding and assembly of alpha-6-beta-2 and alpha-6-beta-2-beta-3 receptors and acts at early stages of the nAChRs subunit assembly. Promotes the expression of the alpha-4(2):beta-2(3) stoichiometric form over the alpha-4(3):beta-2(2) form. The chain is Novel acetylcholine receptor chaperone from Mus musculus (Mouse).